The sequence spans 638 residues: Chaperone protein DnaK (638 aa).

Thr-199 carries the post-translational modification Phosphothreonine; by autocatalysis. The segment at 600-638 (EINQKKSEENLKKEDTSSESKKDENVVDAEFEEIKDPKK) is disordered. A compositionally biased stretch (basic and acidic residues) spans 602-624 (NQKKSEENLKKEDTSSESKKDEN).

It belongs to the heat shock protein 70 family.

Its function is as follows. Acts as a chaperone. This chain is Chaperone protein DnaK, found in Buchnera aphidicola subsp. Schizaphis graminum (strain Sg).